The chain runs to 163 residues: Probable ribosome biogenesis protein RLP24 (163 aa).

The protein belongs to the eukaryotic ribosomal protein eL24 family. Associated with nucleolar and cytoplasmic pre-60S particles. At the end of biogenesis it dissociates from cytoplasmic pre-60S particles and is likely to be exchanged for its ribosomal homolog, RPL24.

The protein resides in the nucleus. It is found in the nucleolus. Functionally, involved in the biogenesis of the 60S ribosomal subunit. Ensures the docking of GTPBP4/NOG1 to pre-60S particles. In Bos taurus (Bovine), this protein is Probable ribosome biogenesis protein RLP24 (RSL24D1).